The following is a 151-amino-acid chain: Macrodomain Ter protein (151 aa).

Belongs to the MatP family. Homodimer.

It localises to the cytoplasm. In terms of biological role, required for spatial organization of the terminus region of the chromosome (Ter macrodomain) during the cell cycle. Prevents early segregation of duplicated Ter macrodomains during cell division. Binds specifically to matS, which is a 13 bp signature motif repeated within the Ter macrodomain. This is Macrodomain Ter protein from Vibrio atlanticus (strain LGP32) (Vibrio splendidus (strain Mel32)).